The following is a 381-amino-acid chain: GDP-mannose transporter (381 aa).

The span at 1 to 12 (MSDDKKSDDYRV) shows a compositional bias: basic and acidic residues. Residues 1-28 (MSDDKKSDDYRVDMPSSRTSRAPSPIMR) are disordered. Topologically, residues 1–36 (MSDDKKSDDYRVDMPSSRTSRAPSPIMRPALKSAPS) are cytoplasmic. Residues 37 to 57 (LTENPMAAVLAYCASSILMTV) traverse the membrane as a helical segment. Residues 58–67 (TNKYVLSGVD) lie on the Lumenal side of the membrane. The chain crosses the membrane as a helical span at residues 68-88 (FNLNFFLLCVQSVVCVTAISI). Over 89 to 107 (CKAAGLITYRDFNTDEAKK) the chain is Cytoplasmic. Residues 108–126 (WFPISLLLIGMIYTGTWAL) form a helical membrane-spanning segment. The Lumenal portion of the chain corresponds to 127-130 (KYLS). A helical membrane pass occupies residues 131 to 153 (IPVYTIFKNLTIILIAYGEVLWF). Residues 154-161 (GGSVTPMT) are Cytoplasmic-facing. A helical membrane pass occupies residues 162–184 (LFSFGLMVLSSIIAAWADIQHAL). The Lumenal segment spans residues 185 to 199 (NSFGQQSEAANEALS). Residues 200-220 (TMHAGYLWMAFNCVCSATYLL) traverse the membrane as a helical segment. At 221-242 (SMRKRIKLTNFKDYDTMYYNNL) the chain is on the cytoplasmic side. Residues 243-263 (LTIPILLVASILVEDWSSANI) traverse the membrane as a helical segment. The Lumenal portion of the chain corresponds to 264-274 (QKNFPPEQRNT). A helical membrane pass occupies residues 275–295 (VIMVMVISGMSTVFISYTSAW). Topologically, residues 296 to 303 (AVRVTSST) are cytoplasmic. A helical transmembrane segment spans residues 304–324 (TYSMVGALNKLPIAISGLVFF). Over 325–327 (DAP) the chain is Lumenal. The helical transmembrane segment at 328–348 (VTFGSVSAIFVGFVSGIVYAV) threads the bilayer. Topologically, residues 349–381 (AKVRQNSKPKTVLPTTNIPLSASSRSMQDSLKA) are cytoplasmic.

Belongs to the TPT transporter family. SLC35D subfamily. Homooligomer.

The protein resides in the golgi apparatus membrane. It is found in the cytoplasmic vesicle membrane. The protein localises to the endoplasmic reticulum membrane. Involved in the import of GDP-mannose from the cytoplasm into the Golgi lumen. This is GDP-mannose transporter (VRG4) from Phaeosphaeria nodorum (strain SN15 / ATCC MYA-4574 / FGSC 10173) (Glume blotch fungus).